A 109-amino-acid polypeptide reads, in one-letter code: Parvalbumin beta (109 aa).

Ser1 is modified (N-acetylserine). EF-hand domains lie at 38-73 and 77-109; these read KTPDVIKKAFYVIDQDKSGFIEEDELKLFLQNFASS and LTDKETETFLKAGDSDGDGKIGIDEFADLVKEA. Ca(2+)-binding residues include Asp51, Asp53, Ser55, Phe57, Glu59, Glu62, Asp90, Asp92, Asp94, Lys96, and Glu101.

This sequence belongs to the parvalbumin family.

Functionally, in muscle, parvalbumin is thought to be involved in relaxation after contraction. It binds two calcium ions. The chain is Parvalbumin beta from Opsanus tau (Oyster toadfish).